A 291-amino-acid chain; its full sequence is ADP-dependent (S)-NAD(P)H-hydrate dehydratase (291 aa).

The 269-residue stretch at 5–273 folds into the YjeF C-terminal domain; sequence SKDILEEVIT…QALPTYMKKY (269 aa). (6S)-NADPHX contacts are provided by Ala40, Gly103, and His153. AMP is bound at residue Gly215. Asp216 is a binding site for (6S)-NADPHX.

This sequence belongs to the NnrD/CARKD family. In terms of assembly, homotetramer. Requires Mg(2+) as cofactor.

The catalysed reaction is (6S)-NADHX + ADP = AMP + phosphate + NADH + H(+). It catalyses the reaction (6S)-NADPHX + ADP = AMP + phosphate + NADPH + H(+). Catalyzes the dehydration of the S-form of NAD(P)HX at the expense of ADP, which is converted to AMP. Together with NAD(P)HX epimerase, which catalyzes the epimerization of the S- and R-forms, the enzyme allows the repair of both epimers of NAD(P)HX, a damaged form of NAD(P)H that is a result of enzymatic or heat-dependent hydration. In Enterococcus faecalis (strain ATCC 700802 / V583), this protein is ADP-dependent (S)-NAD(P)H-hydrate dehydratase.